The following is a 475-amino-acid chain: Glutamate--tRNA ligase 1 (475 aa).

The short motif at Pro-11–Gly-21 is the 'HIGH' region element. Residues Lys-240 to Arg-244 carry the 'KMSKS' region motif. Residue Lys-243 coordinates ATP.

It belongs to the class-I aminoacyl-tRNA synthetase family. Glutamate--tRNA ligase type 1 subfamily. As to quaternary structure, monomer.

The protein localises to the cytoplasm. The enzyme catalyses tRNA(Glu) + L-glutamate + ATP = L-glutamyl-tRNA(Glu) + AMP + diphosphate. Its function is as follows. Catalyzes the attachment of glutamate to tRNA(Glu) in a two-step reaction: glutamate is first activated by ATP to form Glu-AMP and then transferred to the acceptor end of tRNA(Glu). The protein is Glutamate--tRNA ligase 1 of Methylobacterium radiotolerans (strain ATCC 27329 / DSM 1819 / JCM 2831 / NBRC 15690 / NCIMB 10815 / 0-1).